A 338-amino-acid chain; its full sequence is DNA-directed RNA polymerase subunit alpha (338 aa).

Residues 1–233 (MLREEVAVST…DLFIPFLHAE (233 aa)) are alpha N-terminal domain (alpha-NTD). Residues 266–338 (IALKFIFIDQ…IDLPKNKFSN (73 aa)) are alpha C-terminal domain (alpha-CTD).

Belongs to the RNA polymerase alpha chain family. In plastids the minimal PEP RNA polymerase catalytic core is composed of four subunits: alpha, beta, beta', and beta''. When a (nuclear-encoded) sigma factor is associated with the core the holoenzyme is formed, which can initiate transcription.

The protein resides in the plastid. It is found in the chloroplast. It carries out the reaction RNA(n) + a ribonucleoside 5'-triphosphate = RNA(n+1) + diphosphate. DNA-dependent RNA polymerase catalyzes the transcription of DNA into RNA using the four ribonucleoside triphosphates as substrates. The chain is DNA-directed RNA polymerase subunit alpha from Nandina domestica (Heavenly bamboo).